Consider the following 316-residue polypeptide: Ribose-phosphate pyrophosphokinase (316 aa).

ATP is bound by residues 39–41 and 98–99; these read DGE and RQ. The Mg(2+) site is built by His-133 and Asp-172. Lys-195 is an active-site residue. Residues Arg-197, Asp-221, and 225–229 each bind D-ribose 5-phosphate; that span reads DTGGT.

The protein belongs to the ribose-phosphate pyrophosphokinase family. Class I subfamily. Homohexamer. Mg(2+) is required as a cofactor.

The protein resides in the cytoplasm. It carries out the reaction D-ribose 5-phosphate + ATP = 5-phospho-alpha-D-ribose 1-diphosphate + AMP + H(+). It participates in metabolic intermediate biosynthesis; 5-phospho-alpha-D-ribose 1-diphosphate biosynthesis; 5-phospho-alpha-D-ribose 1-diphosphate from D-ribose 5-phosphate (route I): step 1/1. In terms of biological role, involved in the biosynthesis of the central metabolite phospho-alpha-D-ribosyl-1-pyrophosphate (PRPP) via the transfer of pyrophosphoryl group from ATP to 1-hydroxyl of ribose-5-phosphate (Rib-5-P). The chain is Ribose-phosphate pyrophosphokinase from Ralstonia nicotianae (strain ATCC BAA-1114 / GMI1000) (Ralstonia solanacearum).